A 285-amino-acid polypeptide reads, in one-letter code: Tumor necrosis factor ligand superfamily member 13B (285 aa).

Residues 1–46 (MDDSTEREQSRLTSCLKKREEMKLKECVSILPRKESPSVRSSKDGK) are Cytoplasmic-facing. The helical; Signal-anchor for type II membrane protein transmembrane segment at 47–67 (LLAATLLLALLSCCLTVVSFY) threads the bilayer. Over 68–285 (QVAALQGDLA…VTFFGALKLL (218 aa)) the chain is Extracellular. The interval 114–138 (IFEPPAPGEGNSSQNSRNKRAVQGP) is disordered. Asn124 is a glycosylation site (N-linked (GlcNAc...) asparagine). A THD domain is found at 145–284 (DCLQLIADSE…DVTFFGALKL (140 aa)). A disulfide bridge connects residues Cys232 and Cys245. Asn242 carries an N-linked (GlcNAc...) (high mannose) asparagine glycan.

The protein belongs to the tumor necrosis factor family. In terms of assembly, homotrimer. Isoform 2 heteromultimerizes with isoform 1, probably limiting the amount of functional isoform 1 on the cell surface. Isoform 3 is unlikely form trimers or bind to BAFF receptors. In terms of processing, the soluble form derives from the membrane form by proteolytic processing. Post-translationally, isoform 2 is not efficiently shed from the membrane unlike isoform 1. N-glycosylated. Abundantly expressed in peripheral blood Leukocytes and is specifically expressed in monocytes and macrophages. Also found in the spleen, lymph node, bone marrow, T-cells and dendritic cells. A lower expression seen in placenta, heart, lung, fetal liver, thymus, and pancreas. Isoform 2 is expressed in many myeloid cell lines.

The protein resides in the cell membrane. It is found in the secreted. Functionally, cytokine that binds to TNFRSF13B/TACI and TNFRSF17/BCMA. TNFSF13/APRIL binds to the same 2 receptors. Together, they form a 2 ligands -2 receptors pathway involved in the stimulation of B- and T-cell function and the regulation of humoral immunity. A third B-cell specific BAFF-receptor (BAFFR/BR3) promotes the survival of mature B-cells and the B-cell response. Isoform 2 seems to inhibit isoform 1 secretion and bioactivity. In terms of biological role, acts as a transcription factor for its own parent gene, in association with NF-kappa-B p50 subunit, at least in autoimmune and proliferative B-cell diseases. The presence of Delta4BAFF is essential for soluble BAFF release by IFNG/IFN-gamma-stimulated monocytes and for B-cell survival. It can directly or indirectly regulate the differential expression of a large number of genes involved in the innate immune response and the regulation of apoptosis. The sequence is that of Tumor necrosis factor ligand superfamily member 13B (TNFSF13B) from Homo sapiens (Human).